Reading from the N-terminus, the 392-residue chain is Type III polyketide synthase B (392 aa).

57–64 (KLTRLCKT) contacts CoA. Residue Cys-166 is the Nucleophile of the active site. 218–219 (GD) contacts substrate. Residues Leu-269, 309–312 (GGPA), and Ala-312 contribute to the CoA site.

It belongs to the thiolase-like superfamily. Chalcone/stilbene synthases family. Homodimer. Interacts with 4CLL1/ACOS5 and TKPR1. In terms of tissue distribution, expressed in flowers and flower buds (at protein level). Mostly confined to anther tapetal cells.

The protein resides in the endoplasmic reticulum. It functions in the pathway secondary metabolite biosynthesis; flavonoid biosynthesis. Plant type III polyketide synthases (PKSs) that catalyzes the condensation of malonyl-CoA units with various CoA ester starter molecules to generate a diverse array of natural products including long-chain alkyl alpha-pyrones. Accepts up to C(20) chain-length fatty acyl CoAs as starter substrates, and carries out sequential condensations with malonyl-CoA to produce triketide and tetraketide alpha-pyrones, potential sporopollenin precursors. Favorite substrates for are midchain- and v-hydroxylated fatty acyl-CoAs (e.g. 12-hydroxyoctadecanoyl-CoA and 16-hydroxyhexadecanoyl-CoA). Required for pollen development and sporopollenin biosynthesis, the major constituent of exine in the outer pollen wall. In vitro, can use 4-coumaroyl-coenzyme A as substrate to produce bis-noryangonin and fatty acyl-coenzyme A as substrate to produce medium-chain alkyl pyrones. May play a role in both the synthesis of pollen fatty acids and phenolics found in exine. The protein is Type III polyketide synthase B of Arabidopsis thaliana (Mouse-ear cress).